Here is a 333-residue protein sequence, read N- to C-terminus: 6-phosphogluconolactonase (333 aa).

Belongs to the cycloisomerase 2 family.

The enzyme catalyses 6-phospho-D-glucono-1,5-lactone + H2O = 6-phospho-D-gluconate + H(+). The protein operates within carbohydrate degradation; pentose phosphate pathway; D-ribulose 5-phosphate from D-glucose 6-phosphate (oxidative stage): step 2/3. Catalyzes the hydrolysis of 6-phosphogluconolactone to 6-phosphogluconate. In Buchnera aphidicola subsp. Schizaphis graminum (strain Sg), this protein is 6-phosphogluconolactonase.